The chain runs to 345 residues: Transcription factor 19 (345 aa).

The region spanning 31–88 (YRLGHRADLCDVALRPQQEPGLISGIHAELHAEPRGDDWRVSLEDHSSQGTLVNNVRL) is the FHA domain. Phosphoserine is present on Ser-78. Positions 190–227 (LTFSPSWGGPKSLPVPAPPGEMGTTPSAPPQRNRRKSV) are disordered. A PHD-type zinc finger spans residues 293–342 (AAPCCCLPQEETVAWVQCDGCDVWFHVACVGCSIQAAREADFRCPGCRAG). Cys-296, Cys-298, Cys-310, Cys-313, His-318, Cys-321, Cys-336, and Cys-339 together coordinate Zn(2+).

It is found in the nucleus. Potential transcription factor that may play a role in the regulation of genes involved in cell cycle G1/S transition. May bind to regulatory elements of genes, including the promoter of the transcription factor FOXO1. The protein is Transcription factor 19 (TCF19) of Homo sapiens (Human).